Here is a 3183-residue protein sequence, read N- to C-terminus: WD repeat- and FYVE domain-containing protein 4 (3183 aa).

The span at 1–15 shows a compositional bias: basic and acidic residues; the sequence is MEAEDLSKTEDRPED. Disordered regions lie at residues 1-37, 790-811, 938-977, and 1828-1852; these read MEAEDLSKTEDRPEDPGFQNEGQSPAVKPSFSLEGQS, AGQEPSVDAQKAEAGGRQGKFK, KSLHLPPGHEDNPGCSGSCAATAEKPTDSSPRPGGSQALR, and KETTSESSRNTSSPGASAEASHAAE. The segment covering 1832–1852 has biased composition (low complexity); that stretch reads SESSRNTSSPGASAEASHAAE. The BEACH-type PH domain occupies 2383–2508; sequence LDGEKVSQKV…DRSKALKSFS (126 aa). Residues 2525–2819 enclose the BEACH domain; the sequence is NLRKHPGFDR…QIFTKPHPSR (295 aa). A disordered region spans residues 2812-2836; the sequence is FTKPHPSRNTTGKNPGPGKDASTPV. 5 WD repeats span residues 2930–2969, 2979–3018, 3021–3060, 3070–3108, and 3150–3183; these read LAAWGPCLCAVCPSPTMIVTSGASAVVCIWELSLVKGRPR, GHTQAVTCLTASVTFSLLVSGSQDRTCILWDLDHLSRVAC, VHREGISAIAISDVSGTIVSCAGAHLSLWNVNGQPLASIT, TCCCIVEGPAWDASHVIITGSKDGMVRIWKTEDVKMPVP, and KASPAVTALAITRNQSKLLVGDEKGRIFCWSADG.

Interacts with HSP90AB1. Highly expressed in immune tissues, especially B lymphocytes.

Its subcellular location is the early endosome. It localises to the endoplasmic reticulum. In terms of biological role, plays a critical role in the regulation of cDC1-mediated cross-presentation of viral and tumor antigens in dendritic cells. Mechanistically, acts near the plasma membrane and interacts with endosomal membranes to promote endosomal-to-cytosol antigen trafficking. Also plays a role in B-cell survival through regulation of autophagy. In Mus musculus (Mouse), this protein is WD repeat- and FYVE domain-containing protein 4.